Here is a 376-residue protein sequence, read N- to C-terminus: Lipid-A-disaccharide synthase (376 aa).

The protein belongs to the LpxB family.

It carries out the reaction a lipid X + a UDP-2-N,3-O-bis[(3R)-3-hydroxyacyl]-alpha-D-glucosamine = a lipid A disaccharide + UDP + H(+). It participates in bacterial outer membrane biogenesis; LPS lipid A biosynthesis. Functionally, condensation of UDP-2,3-diacylglucosamine and 2,3-diacylglucosamine-1-phosphate to form lipid A disaccharide, a precursor of lipid A, a phosphorylated glycolipid that anchors the lipopolysaccharide to the outer membrane of the cell. The sequence is that of Lipid-A-disaccharide synthase from Coxiella burnetii (strain RSA 331 / Henzerling II).